The following is a 38-amino-acid chain: Large ribosomal subunit protein bL36 (38 aa).

The protein belongs to the bacterial ribosomal protein bL36 family.

The polypeptide is Large ribosomal subunit protein bL36 (Psychrobacter cryohalolentis (strain ATCC BAA-1226 / DSM 17306 / VKM B-2378 / K5)).